Reading from the N-terminus, the 1888-residue chain is Fatty acid synthase subunit alpha (1888 aa).

Residues 98–118 form a disordered region; sequence DLAPVEEPNAEEQTGAAATPA. Positions 146-221 constitute a Carrier domain; sequence VKASLLLHVL…ETFQDTFAGS (76 aa). Residue S181 is modified to O-(pantetheine 4'-phosphoryl)serine. The interval 675-874 is beta-ketoacyl reductase; that stretch reads DKYVLITGAG…CGAIIGWTRG (200 aa). A Ketosynthase family 3 (KS3) domain is found at 1119 to 1657; that stretch reads KQMIQEVVIE…QKGAQAVAVH (539 aa). Catalysis depends on for beta-ketoacyl synthase activity residues C1305, H1542, and H1583. 3 residues coordinate Mg(2+): D1774, V1775, and E1776. Acetyl-CoA contacts are provided by residues 1774–1776, Y1800, S1810, 1819–1829, 1843–1846, and 1873–1875; these read DVE, EAVFKSLGVKS, REAG, and ISH. Mg(2+) is bound by residues S1874 and H1875.

Belongs to the thiolase-like superfamily. Fungal fatty acid synthetase subunit alpha family. Fatty acid synthase is composed of alpha and beta subunits.

It carries out the reaction acetyl-CoA + n malonyl-CoA + 2n NADPH + 4n H(+) = a long-chain-acyl-CoA + n CoA + n CO2 + 2n NADP(+).. The enzyme catalyses a fatty acyl-[ACP] + malonyl-[ACP] + H(+) = a 3-oxoacyl-[ACP] + holo-[ACP] + CO2. The catalysed reaction is a (3R)-hydroxyacyl-[ACP] + NADP(+) = a 3-oxoacyl-[ACP] + NADPH + H(+). Its function is as follows. Fatty acid synthetase catalyzes the formation of long-chain fatty acids from acetyl-CoA, malonyl-CoA and NADPH. The alpha subunit contains domains for: acyl carrier protein, 3-oxoacyl-[acyl-carrier-protein] reductase, and 3-oxoacyl-[acyl-carrier-protein] synthase. In this species, higher amounts of C18 than C16 fatty acids are produced. This is Fatty acid synthase subunit alpha (FAS2) from Lachancea kluyveri (Yeast).